A 587-amino-acid polypeptide reads, in one-letter code: Putative adhesin (587 aa).

Residues 1–19 (MKFAISTLLIILQAAAVFA) form the signal peptide. Cys-211 and Cys-261 are joined by a disulfide. Asn-239 is a glycosylation site (N-linked (GlcNAc...) asparagine). 4 repeat units span residues 432–455 (IVTVITKEGGDKYTKTYEEVTYTK), 466–489 (IVTVKTKEGGEKVTKTYEEVTYTK), 491–512 (PEIVTVVTKEGGEKVTTTYHDV), and 513–531 (PEVVTVITKEGGEKVTTTY). Positions 432–531 (IVTVITKEGG…EGGEKVTTTY (100 aa)) are 4 X 24 AA approximate tandem repeats, Thr-rich. Residue Ser-562 is the site of GPI-anchor amidated serine attachment. Positions 563 to 587 (EAQVNLGSKSAVGLLAIVPMLFLAI) are cleaved as a propeptide — removed in mature form.

Post-translationally, the GPI-anchor is attached to the protein in the endoplasmic reticulum and serves to target the protein to the cell surface. There, the glucosamine-inositol phospholipid moiety is cleaved off and the GPI-modified mannoprotein is covalently attached via its lipidless GPI glycan remnant to the 1,6-beta-glucan of the outer cell wall layer.

The protein localises to the cell membrane. It localises to the secreted. It is found in the cell wall. Putative adhesion protein. May be involved in cell-cell interaction, interacting with other proteins by salt bridges and hydrogen bonds. The sequence is that of Putative adhesin from Komagataella phaffii (strain ATCC 76273 / CBS 7435 / CECT 11047 / NRRL Y-11430 / Wegner 21-1) (Yeast).